Reading from the N-terminus, the 991-residue chain is Valine--tRNA ligase (991 aa).

The short motif at 43 to 53 (PNVTGTLHMGH) is the 'HIGH' region element. Positions 582-586 (KMSKS) match the 'KMSKS' region motif. Residue K585 coordinates ATP. The tract at residues 689–711 (AHSPAQHQAGQDGQDAPRTPQPR) is disordered. Positions 693–704 (AQHQAGQDGQDA) are enriched in low complexity. Positions 925 to 988 (LIDVDAERAR…TQLNGLRERR (64 aa)) form a coiled coil.

It belongs to the class-I aminoacyl-tRNA synthetase family. ValS type 1 subfamily. As to quaternary structure, monomer.

It is found in the cytoplasm. It carries out the reaction tRNA(Val) + L-valine + ATP = L-valyl-tRNA(Val) + AMP + diphosphate. In terms of biological role, catalyzes the attachment of valine to tRNA(Val). As ValRS can inadvertently accommodate and process structurally similar amino acids such as threonine, to avoid such errors, it has a 'posttransfer' editing activity that hydrolyzes mischarged Thr-tRNA(Val) in a tRNA-dependent manner. In Xylella fastidiosa (strain M12), this protein is Valine--tRNA ligase.